Here is a 952-residue protein sequence, read N- to C-terminus: Glycine dehydrogenase (decarboxylating) (952 aa).

Lysine 703 is modified (N6-(pyridoxal phosphate)lysine).

Belongs to the GcvP family. The glycine cleavage system is composed of four proteins: P, T, L and H. Pyridoxal 5'-phosphate is required as a cofactor.

The enzyme catalyses N(6)-[(R)-lipoyl]-L-lysyl-[glycine-cleavage complex H protein] + glycine + H(+) = N(6)-[(R)-S(8)-aminomethyldihydrolipoyl]-L-lysyl-[glycine-cleavage complex H protein] + CO2. In terms of biological role, the glycine cleavage system catalyzes the degradation of glycine. The P protein binds the alpha-amino group of glycine through its pyridoxal phosphate cofactor; CO(2) is released and the remaining methylamine moiety is then transferred to the lipoamide cofactor of the H protein. The polypeptide is Glycine dehydrogenase (decarboxylating) (Mycolicibacterium gilvum (strain PYR-GCK) (Mycobacterium gilvum (strain PYR-GCK))).